Here is a 211-residue protein sequence, read N- to C-terminus: Small ribosomal subunit protein uS5 (211 aa).

The S5 DRBM domain occupies 51 to 114; sequence LKHEVLDVSL…ANAKLNITPV (64 aa).

This sequence belongs to the universal ribosomal protein uS5 family. In terms of assembly, part of the 30S ribosomal subunit. Contacts protein S4.

Functionally, with S4 and S12 plays an important role in translational accuracy. This is Small ribosomal subunit protein uS5 from Ignicoccus hospitalis (strain KIN4/I / DSM 18386 / JCM 14125).